The chain runs to 779 residues: Endoribonuclease YSH1 (779 aa).

6 residues coordinate Zn(2+): histidine 68, histidine 70, aspartate 72, histidine 73, histidine 163, and aspartate 184. The active-site Proton donor is the histidine 408. Histidine 430 contacts Zn(2+). Serine 517 is modified (phosphoserine; by ATM or ATR).

This sequence belongs to the metallo-beta-lactamase superfamily. RNA-metabolizing metallo-beta-lactamase-like family. CPSF2/YSH1 subfamily. As to quaternary structure, component of the cleavage and polyadenylation factor (CPF) complex, which is composed of at least PTI1, SYC1, SSU72, GLC7, MPE1, REF2, PFS2, PTA1, YSH1/BRR5, SWD2, CFT2/YDH1, YTH1, CFT1/YHH1, FIP1 and PAP1. Interacts with FIP1, PFS2, RNA14 and YTH1. Requires Zn(2+) as cofactor.

Its subcellular location is the nucleus. Its function is as follows. Component of the cleavage and polyadenylation factor (CPF) complex, which plays a key role in polyadenylation-dependent pre-mRNA 3'-end formation and cooperates with cleavage factors including the CFIA complex and NAB4/CFIB. Has endonuclease activity. This is Endoribonuclease YSH1 (YSH1) from Saccharomyces cerevisiae (strain ATCC 204508 / S288c) (Baker's yeast).